The sequence spans 412 residues: BSD domain-containing protein 1 (412 aa).

In terms of domain architecture, BSD spans 145–197 (WLSTFSLEERKAEISELLVSSPAIRALYTKMVPAAVAHAEFWQRYFYKVFQLE). Basic and acidic residues predominate over residues 208-217 (QRAEQTDHSE). Disordered regions lie at residues 208 to 227 (QRAE…EDEE), 253 to 272 (VTVA…ASLS), and 298 to 412 (ESVT…ENWE). 2 stretches are compositionally biased toward polar residues: residues 259–272 (PESS…ASLS) and 298–308 (ESVTIRVTQPS). A Phosphoserine modification is found at serine 308. Positions 328–349 (PEERPAPREETAREDMAQDLRV) are enriched in basic and acidic residues. Residues 353–372 (NSDSGKSTPSNNGKKGSSTD) are compositionally biased toward polar residues. Composition is skewed to acidic residues over residues 373–390 (VSED…EEEV) and 400–412 (TEEL…ENWE).

The protein is BSD domain-containing protein 1 (bsdc1) of Danio rerio (Zebrafish).